A 445-amino-acid polypeptide reads, in one-letter code: N-succinylarginine dihydrolase (445 aa).

Substrate is bound by residues A19 to S28, N110, and H137 to R138. The active site involves E174. R214 contacts substrate. Residue H250 is part of the active site. Substrate is bound by residues D252 and N363. C369 functions as the Nucleophile in the catalytic mechanism.

The protein belongs to the succinylarginine dihydrolase family. As to quaternary structure, homodimer.

The catalysed reaction is N(2)-succinyl-L-arginine + 2 H2O + 2 H(+) = N(2)-succinyl-L-ornithine + 2 NH4(+) + CO2. The protein operates within amino-acid degradation; L-arginine degradation via AST pathway; L-glutamate and succinate from L-arginine: step 2/5. Its function is as follows. Catalyzes the hydrolysis of N(2)-succinylarginine into N(2)-succinylornithine, ammonia and CO(2). This Shewanella pealeana (strain ATCC 700345 / ANG-SQ1) protein is N-succinylarginine dihydrolase.